Here is a 431-residue protein sequence, read N- to C-terminus: Chaperone SurA (431 aa).

An N-terminal signal peptide occupies residues 1 to 22; it reads MKLWKPTLISVLSALTLFNAHA. PpiC domains follow at residues 173–271 and 280–380; these read TVQY…KIDD and VTEV…EVLD.

It is found in the periplasm. It carries out the reaction [protein]-peptidylproline (omega=180) = [protein]-peptidylproline (omega=0). Chaperone involved in the correct folding and assembly of outer membrane proteins. Recognizes specific patterns of aromatic residues and the orientation of their side chains, which are found more frequently in integral outer membrane proteins. May act in both early periplasmic and late outer membrane-associated steps of protein maturation. The protein is Chaperone SurA of Vibrio cholerae serotype O1 (strain ATCC 39315 / El Tor Inaba N16961).